We begin with the raw amino-acid sequence, 917 residues long: Interleukin-6 receptor subunit beta (917 aa).

Positions 1–22 are cleaved as a signal peptide; that stretch reads MSAPRIWLAQALLFFLTTESIG. Residues 23 to 617 lie on the Extracellular side of the membrane; it reads QLLEPCGYIY…TPKFAQGEIE (595 aa). One can recognise an Ig-like C2-type domain in the interval 26–120; the sequence is EPCGYIYPEF…IEQNVYGVTM (95 aa). Cystine bridges form between cysteine 28–cysteine 54 and cysteine 48–cysteine 103. 4 N-linked (GlcNAc...) asparagine glycosylation sites follow: asparagine 43, asparagine 61, asparagine 83, and asparagine 131. 5 consecutive Fibronectin type-III domains span residues 128–221, 222–322, 327–417, 422–515, and 517–611; these read KPTN…VKPT, PPYN…TYED, PPSF…IPSP, AYSV…LKQA, and PARG…TPKF. The cysteines at positions 134 and 144 are disulfide-linked. N-linked (GlcNAc...) asparagine glycosylation occurs at asparagine 157. The cysteines at positions 172 and 180 are disulfide-linked. A glycan (N-linked (GlcNAc...) asparagine) is linked at asparagine 225. The WSXWS motif signature appears at 308 to 312; the sequence is WSDWS. The N-linked (GlcNAc...) asparagine glycan is linked to asparagine 388. Cysteine 456 and cysteine 464 are oxidised to a cystine. Asparagine 476 and asparagine 551 each carry an N-linked (GlcNAc...) asparagine glycan. Residues 618–639 traverse the membrane as a helical segment; it reads AIVVPVCLAFLLTTLLGVLFCF. The Cytoplasmic segment spans residues 640–917; sequence NKRDLIKKHI…TVRQGGYMPQ (278 aa). The short motif at 649–657 is the Box 1 motif element; it reads IWPNVPDPS. Disordered regions lie at residues 658-678 and 719-754; these read KSHIAQWSPHTPPRHNFNSKD and TEGHSSGIGGSSCMSSSRPSISSNEENESAQSTAST. Phosphoserine occurs at positions 659 and 665. Low complexity predominate over residues 729-753; it reads SSCMSSSRPSISSNEENESAQSTAS. Phosphoserine occurs at positions 780, 787, 827, and 837. Residues 898 to 917 form a disordered region; that stretch reads EEIPKSYLPQTVRQGGYMPQ.

The protein belongs to the type I cytokine receptor family. Type 2 subfamily. Component of a hexamer of two molecules each of IL6, IL6R and IL6ST; associates with the complex IL6:IL6R but does not interact with IL6. Forms heterodimers composed of LIFR and IL6ST (type I OSM receptor) which are activated by LIF and OSM. Also forms heterodimers composed of OSMR and IL6ST (type II receptor) which are activated by OSM but not by LIF. Interacts with HCK. Interacts with INPP5D/SHIP1. Interacts with SRC and YES. Interacts with ARMH4; this interaction prevents IL6ST protein homodimerization and bridges ARMH4 with IL6R and STAT3 and therefore inhibits phosphorylation of STAT3 at 'Tyr-705'. Post-translationally, phosphorylation of Ser-780 down-regulates cell surface expression. In terms of processing, heavily N-glycosylated. Glycosylation is required for protein stability and localization in plasma membrane but not for ligand binding. As to expression, expression not restricted to IL6-responsive cells. Found in tissues such as brain, heart, thymus, spleen, kidney, lung and liver. Found in all the cell lines tested except BaF-B03. Expressed paraventricular nucleus of the hypothalamus.

It localises to the cell membrane. Its function is as follows. Signal-transducing molecule. The receptor systems for IL6, LIF, OSM, CNTF, IL11, CTF1 and BSF3 can utilize IL6ST for initiating signal transmission. Binding of IL6 to IL6R induces IL6ST homodimerization and formation of a high-affinity receptor complex, which activates the intracellular JAK-MAPK and JAK-STAT3 signaling pathways. That causes phosphorylation of IL6ST tyrosine residues which in turn activates STAT3. In parallel, the IL6 signaling pathway induces the expression of two cytokine receptor signaling inhibitors, SOCS1 and SOCS3, which inhibit JAK and terminate the activity of the IL6 signaling pathway as a negative feedback loop. Also activates the yes-associated protein 1 (YAP) and NOTCH pathways to control inflammation-induced epithelial regeneration, independently of STAT3. Mediates signals which regulate immune response, hematopoiesis, pain control and bone metabolism. Has a role in embryonic development. Essential for survival of motor and sensory neurons and for differentiation of astrocytes. Required for expression of TRPA1 in nociceptive neurons. Required for the maintenance of PTH1R expression in the osteoblast lineage and for the stimulation of PTH-induced osteoblast differentiation. Required for normal trabecular bone mass and cortical bone composition. In Mus musculus (Mouse), this protein is Interleukin-6 receptor subunit beta.